A 438-amino-acid polypeptide reads, in one-letter code: sn-glycerol-3-phosphate-binding periplasmic protein UgpB (438 aa).

Residues 1-23 (MKPLRYTASALALGLALMANAQA) form the signal peptide. Positions 65, 89, 144, 270, 307, 346, and 397 each coordinate sn-glycerol 3-phosphate.

This sequence belongs to the bacterial solute-binding protein 1 family. As to quaternary structure, the complex is composed of two ATP-binding proteins (UgpC), two transmembrane proteins (UgpA and UgpE) and a solute-binding protein (UgpB).

The protein localises to the periplasm. Functionally, part of the ABC transporter complex UgpBAEC involved in sn-glycerol-3-phosphate (G3P) import. Binds G3P. The sequence is that of sn-glycerol-3-phosphate-binding periplasmic protein UgpB (ugpB) from Escherichia coli O6:K15:H31 (strain 536 / UPEC).